The chain runs to 79 residues: Dolichyl-diphosphooligosaccharide--protein glycosyltransferase subunit TMEM258 (79 aa).

Met-1 bears the N-acetylmethionine mark. Topologically, residues 1-16 (MELEAMSRYTSPVNPA) are lumenal. Residues 17-37 (VFPHLTVVLLAIGMFFTAWFF) traverse the membrane as a helical segment. At 38–54 (VYEVTSTKYTRDICKEL) the chain is on the cytoplasmic side. The helical transmembrane segment at 55–75 (LISLVASLFMGFGVLFLLLWV) threads the bilayer. Over 76–79 (GIYV) the chain is Lumenal.

This sequence belongs to the OST5 family. Component of the oligosaccharyltransferase (OST) complex. OST exists in two different complex forms which contain common core subunits RPN1, RPN2, OST48, OST4, DAD1 and TMEM258, either STT3A or STT3B as catalytic subunits, and form-specific accessory subunits. STT3A complex assembly occurs through the formation of 3 subcomplexes. Subcomplex 1 contains RPN1 and TMEM258, subcomplex 2 contains the STT3A-specific subunits STT3A, DC2/OSTC, and KCP2 as well as the core subunit OST4, and subcomplex 3 contains RPN2, DAD1, and OST48. The STT3A complex can form stable complexes with the Sec61 complex or with both the Sec61 and TRAP complexes.

The protein resides in the membrane. It localises to the endoplasmic reticulum. Its subcellular location is the cytoplasm. It functions in the pathway protein modification; protein glycosylation. Functionally, subunit of the oligosaccharyl transferase (OST) complex that catalyzes the initial transfer of a defined glycan (Glc(3)Man(9)GlcNAc(2) in eukaryotes) from the lipid carrier dolichol-pyrophosphate to an asparagine residue within an Asn-X-Ser/Thr consensus motif in nascent polypeptide chains, the first step in protein N-glycosylation. N-glycosylation occurs cotranslationally and the complex associates with the Sec61 complex at the channel-forming translocon complex that mediates protein translocation across the endoplasmic reticulum (ER). All subunits are required for a maximal enzyme activity. The sequence is that of Dolichyl-diphosphooligosaccharide--protein glycosyltransferase subunit TMEM258 from Canis lupus familiaris (Dog).